The following is a 159-amino-acid chain: Globin D, coelomic (159 aa).

Glycine 2 is modified (N-acetylglycine). A Globin domain is found at 12 to 158 (DLTPAEKDLI…VQGVLITKHA (147 aa)). The heme b site is built by histidine 74 and histidine 105.

It belongs to the globin family. Homodimer.

This is Globin D, coelomic from Molpadia arenicola (Sea cucumber).